We begin with the raw amino-acid sequence, 219 residues long: Flagellin B4 (219 aa).

The propeptide occupies 1–5; that stretch reads MHRKG.

The protein belongs to the archaeal flagellin family.

It is found in the archaeal flagellum. Its function is as follows. Flagellin is the subunit protein which polymerizes to form the filaments of archaeal flagella. In Pyrococcus abyssi (strain GE5 / Orsay), this protein is Flagellin B4 (flaB4).